The sequence spans 248 residues: MNGLGMQKFEHPLNERTRIYLRIESLFRKLGHSADLTQPFEYQVFFSSLFNMLDILEQVQVKAELGKDLEKLRLQYRAWMDIEGVDQSALLSVLEQISQVHQNLMQTTRPGHSLKEDRFLSALKQRFFIPGGDCCFDLPALHHWLHLPLEVRCRNTHNWMAQLLSLSDALSLWLRLTRETARFEPQIARNGFMQSEMENANLLRLEIPIDQGVYPMISGHKSRFALRFMSFETNKNCEKDIEFTLAVC.

The protein belongs to the ZapD family. Interacts with FtsZ.

Its subcellular location is the cytoplasm. Cell division factor that enhances FtsZ-ring assembly. Directly interacts with FtsZ and promotes bundling of FtsZ protofilaments, with a reduction in FtsZ GTPase activity. This is Cell division protein ZapD from Aliivibrio fischeri (strain ATCC 700601 / ES114) (Vibrio fischeri).